The chain runs to 229 residues: uncharacterized protein (229 aa).

The S4 RNA-binding domain maps to 2–69; the sequence is QRLAKLISNA…KSRLWIYYKP (68 aa). Residue Asp102 is the Nucleophile of the active site.

This sequence belongs to the pseudouridine synthase RsuA family.

It catalyses the reaction a uridine in RNA = a pseudouridine in RNA. This is an uncharacterized protein from Rickettsia bellii (strain RML369-C).